The primary structure comprises 865 residues: Nitrogen regulatory protein nrfA (865 aa).

Disordered regions lie at residues 1-75 (MEGI…DEMQ), 115-140 (RKER…PSGI), 177-227 (FDSP…QDQR), 557-605 (GSTD…RTAS), and 617-663 (LNGS…AGPT). A compositionally biased stretch (low complexity) spans 32–46 (DDFTFDSPFSSSGSS). Basic and acidic residues-rich tracts occupy residues 115-126 (RKEREQQEREQQ) and 180-189 (PAEHPSHPSA). A compositionally biased stretch (polar residues) spans 582–592 (ASVSDVRNQNQ). A GATA-type zinc finger spans residues 665 to 689 (CTNCFTQTTPLWRRNPEGQPLCNAC). The interval 713–854 (NRSSANTLAV…NHSIAGGQGA (142 aa)) is disordered. 2 stretches are compositionally biased toward polar residues: residues 715 to 724 (SSANTLAVGT) and 737 to 764 (IQHA…SNTL). Composition is skewed to low complexity over residues 771-786 (PIAA…AGVA) and 830-844 (PLAP…ANPA).

The protein localises to the nucleus. In terms of biological role, major nitrogen regulatory protein. The protein is Nitrogen regulatory protein nrfA (nrfA) of Penicillium urticae.